The following is a 355-amino-acid chain: MHTLPVKTGTRPLAQVQKLIPGLLLSAALAGVAILLGRSQWLQHNGISALTLAIVLGILVGNTLYPRIAAGSAAGVGFSKQILLRAGIILYGLRLTFQDIAGVGLHGVLLDALMLASTFGLACLLGTRLFGLDRTTTLLIGAGSSICGAAAVMATEPVVRGRAEQVAVAVSTVVVFGTLGIFLYPALFQLDQDWGLLPRDPGTWGVYIGATVHEVAQVVAAGRSIGIEAADTAVIAKMVRVMMLAPFLILLSAWLARDKAHRRQHSGATKITIPWFAVGFVLVAGLNSLVSLPPALVSHVNDLDTFLLAMAMAGLGLGTHLSAIRRAGLKPLLLAALLFAWLVLGGGFLTRLALA.

10 consecutive transmembrane segments (helical) span residues 20–37 (IPGL…ILLG), 44–66 (HNGI…TLYP), 71–93 (GSAA…LYGL), 100–122 (IAGV…FGLA), 137–159 (TLLI…EPVV), 166–188 (VAVA…PALF), 233–255 (AVIA…SAWL), 275–297 (WFAV…PALV), 307–324 (LLAM…LSAI), and 331–353 (PLLL…TRLA).

This sequence belongs to the UPF0324 family.

The protein resides in the cell membrane. In Pseudomonas aeruginosa (strain ATCC 15692 / DSM 22644 / CIP 104116 / JCM 14847 / LMG 12228 / 1C / PRS 101 / PAO1), this protein is UPF0324 membrane protein PA5383.